Consider the following 449-residue polypeptide: Protein tweety homolog 1-A (449 aa).

Residues 1–43 (MSTSHGYRASWWTNILHQVPHTNFQFEVVDNQFAPQEWPYQQA) lie on the Extracellular side of the membrane. The chain crosses the membrane as a helical span at residues 44-64 (LLFLASIAGLCLAISLILICV). Over 65–86 (YLIRFCCCASQEDDDSKNHRVC) the chain is Cytoplasmic. A helical transmembrane segment spans residues 87-107 (CVTWSCVAAVIICCAGIGIGF). Residues 108-212 (YGNSETNDGV…QVNFIEDYRW (105 aa)) are Extracellular-facing. Asn-128 carries an N-linked (GlcNAc...) asparagine glycan. The chain crosses the membrane as a helical span at residues 213–233 (LAYILLLLLDLIICLFTLLGL). The Cytoplasmic portion of the chain corresponds to 234 to 238 (AKRIK). The helical transmembrane segment at 239 to 259 (WLVIVMTVVSFFVLLLSWGSM) threads the bilayer. At 260-388 (GLEMATAVGL…LKGLCYDGME (129 aa)) the chain is on the extracellular side. Disulfide bonds link Cys-273-Cys-383 and Cys-301-Cys-368. Residues Asn-282 and Asn-353 are each glycosylated (N-linked (GlcNAc...) asparagine). A helical transmembrane segment spans residues 389 to 409 (GILFLLLFSFLSALSFTAAVC). The Cytoplasmic segment spans residues 410-449 (SLPRAWKRFQNRDLDYDDMDEDDPFNPQESKRFVQWQSSI).

Belongs to the tweety family. As to quaternary structure, homotetramer; disulfide-linked. Homodimer.

It is found in the cell membrane. It catalyses the reaction chloride(in) = chloride(out). The catalysed reaction is L-glutamate(out) = L-glutamate(in). In terms of biological role, may act as a calcium-independent, swelling-dependent volume-regulated anion channel (VRAC-swell) which plays a pivotal role in the process of regulatory volume decrease (RVD) in the brain through the efflux of anions like chloride and organic osmolytes like glutamate. The polypeptide is Protein tweety homolog 1-A (ttyh1-a) (Xenopus laevis (African clawed frog)).